Here is a 498-residue protein sequence, read N- to C-terminus: Putative antiporter subunit mnhD2 (498 aa).

A run of 14 helical transmembrane segments spans residues 2–22 (LSNLLILPMLLPFLCALILVF), 32–52 (YLYLGTMTITTIISLMLLIYV), 78–98 (LSLIMVTTASFVITLIMAYGF), 108–128 (YHLPSFILFLSVGVIGSFLTS), 130–150 (LFNLYVMFEIMLLASFVLITL), 161–181 (IIYVVLNIIGSWLFLLGIGLL), 209–229 (ISLIFLVAFSAKAALVLFMWL), 240–260 (LAALFAALMTKVGAYALIRFF), 271–291 (IHPLLATMAAITMVIGAIGVI), 308–328 (IGFIILGLGTNTFAGINGAIF), 330–350 (LVNDIVVKTLLFFIIGSLVYI), 369–389 (FGVAFIIMIFAIGGVPPFSGF), 403–423 (GNYIGLALMIITSLIAMYSLF), and 451–471 (ILSILVVVVIAIGIAAPVVLN).

It belongs to the CPA3 antiporters (TC 2.A.63) subunit D family. In terms of assembly, may form a heterooligomeric complex that consists of seven subunits: mnhA2, mnhB2, mnhC2, mnhD2, mnhE2, mnhF2 and mnhG2.

It localises to the cell membrane. The polypeptide is Putative antiporter subunit mnhD2 (mnhD2) (Staphylococcus aureus (strain JH1)).